The chain runs to 101 residues: uncharacterized protein (101 aa).

This is an uncharacterized protein from Escherichia coli (strain K12).